Reading from the N-terminus, the 290-residue chain is Membrane protein insertase YidC 2 (290 aa).

Residues 1–19 (MKKKALLPLFLGIMIFLAG) form the signal peptide. Cysteine 20 carries the N-palmitoyl cysteine lipid modification. Cysteine 20 is lipidated: S-diacylglycerol cysteine. Helical transmembrane passes span 56–76 (FGLA…PFML), 134–154 (MLGC…YFVL), 176–196 (PDIW…VVSS), 211–231 (MVIS…ALGL), and 232–252 (YWSV…IYYS). The segment at 266 to 290 (YEREHNPSSKKKGKNTQVVSKKNKK) is disordered. Residues 280–290 (NTQVVSKKNKK) are compositionally biased toward polar residues.

It belongs to the OXA1/ALB3/YidC family. Type 2 subfamily.

The protein localises to the cell membrane. Functionally, required for the insertion and/or proper folding and/or complex formation of integral membrane proteins into the membrane. Involved in integration of membrane proteins that insert both dependently and independently of the Sec translocase complex, as well as at least some lipoproteins. This Staphylococcus epidermidis (strain ATCC 35984 / DSM 28319 / BCRC 17069 / CCUG 31568 / BM 3577 / RP62A) protein is Membrane protein insertase YidC 2.